A 413-amino-acid chain; its full sequence is MTATSLWELAERARKRLSEIAKGNRDRALLAMADLLEARWEEVLRANREDLEEAERTGLPKAKLDRLALKEKDLKTLTEGLRQIARLPDPLGRIEGLAKRPNGLRVGRMRVPLGLIGFIYEARPGATVEAVSVALKAGNAMLLRGGKEAFRSNRALVALWHEALGEAGLPEEAVTLVPTTDREAVLEMCRLELLDLLIPRGGEELIRLVQREARVPVLAHAKGVNHLYVDKKADLSMALRLALNGKTQRPAVCNALETVLVHEKVAEAFLPRLEKAMREKGVELRACPRALPLLKEAVPAREDEWDREYLDLVLRVKVVSGLEEALAHIARYGSRHTEAICTEDPKAAWRFLEEVDASLVLWNASTRFNDGFELGLGAEIGISTSKLHAYGPMGPMELTTLKWVALGEGQERT.

This sequence belongs to the gamma-glutamyl phosphate reductase family.

The protein localises to the cytoplasm. It catalyses the reaction L-glutamate 5-semialdehyde + phosphate + NADP(+) = L-glutamyl 5-phosphate + NADPH + H(+). The protein operates within amino-acid biosynthesis; L-proline biosynthesis; L-glutamate 5-semialdehyde from L-glutamate: step 2/2. Functionally, catalyzes the NADPH-dependent reduction of L-glutamate 5-phosphate into L-glutamate 5-semialdehyde and phosphate. The product spontaneously undergoes cyclization to form 1-pyrroline-5-carboxylate. The sequence is that of Gamma-glutamyl phosphate reductase from Thermus thermophilus (strain ATCC 27634 / DSM 579 / HB8).